The following is a 654-amino-acid chain: Sucrose:sucrose 1-fructosyltransferase (654 aa).

Positions 1–106 are excised as a propeptide; sequence MESSAVVPGT…VSEKASGAYS (106 aa). N-linked (GlcNAc...) asparagine glycosylation is present at N32. The active site involves D136. N-linked (GlcNAc...) asparagine glycosylation is found at N328, N457, N491, N506, and N625.

The protein belongs to the glycosyl hydrolase 32 family. As to quaternary structure, monomer. Accumulates at the base of growing leaves.

The protein localises to the vacuole. It catalyses the reaction 2 sucrose = 1(F)-beta-D-fructosylsucrose + D-glucose. Its function is as follows. Transferase involved in fructan biosynthesis that catalyzes the production of 1-kestose (fructose and nystose to a lower extent) from sucrose. Also exhibits some hydrolase activity toward 1-kestose, thus producing fructose and sucrose. A weak fructosyltransferase activity leads to the formation of nystose from 1-kestose. This chain is Sucrose:sucrose 1-fructosyltransferase (1-SST), found in Festuca arundinacea (Tall fescue).